We begin with the raw amino-acid sequence, 152 residues long: MSTKKIILKSSDGHSFEVEEEAACQCQTIAHMSEDDCTDNGIPLPEVTGKILEMVIEYCNKHHVDAANPCSDEDLKKWDKEFMEKYQSTIFDLIMAANYLNIKSLLDLACQTVADMIKDNTVEHTRKFFNIENDYTHEEEEAVRRENQWGFE.

Residues 94-152 (IMAANYLNIKSLLDLACQTVADMIKDNTVEHTRKFFNIENDYTHEEEEAVRRENQWGFE) are interaction with the F-box domain of F-box proteins.

The protein belongs to the SKP1 family. Part of a SCF (SKP1-cullin-F-box) protein ligase complex. Interacts with CPR1/CPR30. Expressed in young seedlings, roots, leaves, floral stems, inflorescences, and siliques.

It localises to the nucleus. Its pathway is protein modification; protein ubiquitination. Involved in ubiquitination and subsequent proteasomal degradation of target proteins. Together with CUL1, RBX1 and a F-box protein, it forms a SCF E3 ubiquitin ligase complex. The functional specificity of this complex depends on the type of F-box protein. In the SCF complex, it serves as an adapter that links the F-box protein to CUL1. This chain is SKP1-like protein 10 (ASK10), found in Arabidopsis thaliana (Mouse-ear cress).